The sequence spans 166 residues: FMN reductase (NADH) RutF (166 aa).

It belongs to the non-flavoprotein flavin reductase family. RutF subfamily.

It catalyses the reaction FMNH2 + NAD(+) = FMN + NADH + 2 H(+). Its function is as follows. Catalyzes the reduction of FMN to FMNH2 which is used to reduce pyrimidine by RutA via the Rut pathway. This Cronobacter sakazakii (strain ATCC BAA-894) (Enterobacter sakazakii) protein is FMN reductase (NADH) RutF.